The primary structure comprises 626 residues: Endo-1,3(4)-beta-glucanase xgeA (626 aa).

Residues 1-25 form the signal peptide; the sequence is MSSSLMRRVGSLAASAIIFPGIAHA. One can recognise a GH16 domain in the interval 33–286; that stretch reads ESWEGEKILN…WAGGVFGDSG (254 aa). A glycan (N-linked (GlcNAc...) asparagine) is linked at Asn-61. Glu-142 functions as the Nucleophile in the catalytic mechanism. Glu-147 functions as the Proton donor in the catalytic mechanism. A compositionally biased stretch (low complexity) spans 477–494; that stretch reads ASTDAAAATTPAAEPHPS. The segment at 477-533 is disordered; the sequence is ASTDAAAATTPAAEPHPSNAETPADSKSSADAVTAQATKTTIAVNTPNPATDSASSV. Positions 495–533 are enriched in polar residues; that stretch reads NAETPADSKSSADAVTAQATKTTIAVNTPNPATDSASSV. Gly-603 is lipidated: GPI-anchor amidated glycine. Residues 604 to 626 constitute a propeptide, removed in mature form; it reads VGSKVSISASVAIAAFVMLLLVN.

It belongs to the glycosyl hydrolase 16 family.

Its subcellular location is the cell membrane. It carries out the reaction Endohydrolysis of (1-&gt;3)- or (1-&gt;4)-linkages in beta-D-glucans when the glucose residue whose reducing group is involved in the linkage to be hydrolyzed is itself substituted at C-3.. In terms of biological role, mixed-linked glucanase involved in the degradation of complex natural cellulosic substrates. Active on laminarin. lichenan, soluble carboxymethyl cellulose but not on pustulan. This is Endo-1,3(4)-beta-glucanase xgeA (xgeA) from Emericella nidulans (strain FGSC A4 / ATCC 38163 / CBS 112.46 / NRRL 194 / M139) (Aspergillus nidulans).